A 146-amino-acid chain; its full sequence is Cytochrome c-type biogenesis protein CcmE (146 aa).

Residues 1 to 8 (MNPRRKKR) are Cytoplasmic-facing. A helical; Signal-anchor for type II membrane protein membrane pass occupies residues 9–29 (LGLILALVLGASATVGLMLYA). Residues 30-146 (LNQNMDLFYT…EVAEAMKKTH (117 aa)) are Periplasmic-facing. Heme contacts are provided by His129 and Tyr133.

The protein belongs to the CcmE/CycJ family.

It localises to the cell inner membrane. Its function is as follows. Heme chaperone required for the biogenesis of c-type cytochromes. Transiently binds heme delivered by CcmC and transfers the heme to apo-cytochromes in a process facilitated by CcmF and CcmH. This Aliivibrio salmonicida (strain LFI1238) (Vibrio salmonicida (strain LFI1238)) protein is Cytochrome c-type biogenesis protein CcmE.